The primary structure comprises 148 residues: Endoribonuclease YbeY (148 aa).

The Zn(2+) site is built by His-112, His-116, and His-122.

Belongs to the endoribonuclease YbeY family. It depends on Zn(2+) as a cofactor.

Its subcellular location is the cytoplasm. Functionally, single strand-specific metallo-endoribonuclease involved in late-stage 70S ribosome quality control and in maturation of the 3' terminus of the 16S rRNA. The chain is Endoribonuclease YbeY from Albidiferax ferrireducens (strain ATCC BAA-621 / DSM 15236 / T118) (Rhodoferax ferrireducens).